The sequence spans 86 residues: High affinity immunoglobulin epsilon receptor subunit gamma (86 aa).

The signal sequence occupies residues 1-18; that stretch reads MIPAVILFLLLLVEEAAA. Over 19 to 23 the chain is Extracellular; the sequence is LGEPQ. Residues 24-44 form a helical membrane-spanning segment; it reads LCYILDAILFLYGIVLTLLYC. Residues 45–86 lie on the Cytoplasmic side of the membrane; it reads RLKIQVRKADIASREKSDAVYTGLNTRNQETYETLKHEKPPQ. An ITAM domain is found at 54–82; it reads DIASREKSDAVYTGLNTRNQETYETLKHE. Tyr65 and Tyr76 each carry phosphotyrosine. Thr78 is subject to Phosphothreonine.

Belongs to the CD3Z/FCER1G family. As to quaternary structure, igE Fc receptor is a tetramer of an alpha chain, a beta chain, and two disulfide linked gamma chains. Associates with FCGR1A to form a functional receptor complex. The signaling subunit of immunoglobulin gamma (IgG) Fc receptor complex. As a homodimer or a heterodimer of CD247 and FCER1G, associates with the ligand binding subunit FCGR3A to form a functional receptor complex. Associates with CLEC6A. Interacts with CLEC4E. Interacts (via ITAM domain) with SYK (via SH2 domains); activates SYK, enabling integrin-mediated activation of neutrophils and macrophages. Interacts with common beta chain of interleukin 3 receptor CSF2RB and recruits SYK in response to IL3 stimulation; this interaction is direct. Interacts with CD300LH; the interaction may be indirect. Interacts with CD300LD. Interacts with TARM1. As to expression, expressed in leukocytes and pinealocytes. Expression in the pineal gland does not undergo circadian variations.

The protein resides in the cell membrane. Functionally, adapter protein containing an immunoreceptor tyrosine-based activation motif (ITAM) that transduces activation signals from various immunoreceptors. As a component of the high-affinity immunoglobulin E (IgE) receptor, mediates allergic inflammatory signaling in mast cells. As a constitutive component of interleukin-3 receptor complex, selectively mediates interleukin 4/IL4 production by basophils priming T-cells toward effector T-helper 2 subset. Associates with pattern recognition receptors CLEC4D and CLEC4E to form a functional signaling complex in myeloid cells. Binding of mycobacterial trehalose 6,6'-dimycolate (TDM) to this receptor complex leads to phosphorylation of ITAM, triggering activation of SYK, CARD9 and NF-kappa-B, consequently driving maturation of antigen-presenting cells and shaping antigen-specific priming of T-cells toward effector T-helper 1 and T-helper 17 cell subtypes. May function cooperatively with other activating receptors. Functionally linked to integrin beta-2/ITGB2-mediated neutrophil activation. Also involved in integrin alpha-2/ITGA2-mediated platelet activation. The sequence is that of High affinity immunoglobulin epsilon receptor subunit gamma (Fcer1g) from Rattus norvegicus (Rat).